We begin with the raw amino-acid sequence, 485 residues long: Trk system potassium uptake protein TrkH (485 aa).

The Cytoplasmic segment spans residues 1–2; the sequence is MQ. The chain crosses the membrane as a helical span at residues 3–29; sequence FRSIIRIVGLLLALFSVTMLAPALVAL. Topologically, residues 30–35 are periplasmic; it reads LYRDGA. Residues 36-57 form a helical membrane-spanning segment; the sequence is GVPFVTTFFVLLFCGAMCWFPN. At 58–65 the chain is on the cytoplasmic side; that stretch reads RRHKHELK. The helical transmembrane segment at 66–90 threads the bilayer; the sequence is SRDGFLIVVLFWTVLGSAGSLPFLI. An intramembrane region (helical; Pore-forming) is located at residues 98–109; it reads VTDAFFESFSAL. The stretch at 110–115 is an intramembrane region; sequence TTTGAT. Residues 110–115 form a selectivity filter part 1 region; that stretch reads TTTGAT. Positions 111 and 112 each coordinate K(+). Residues 116 to 124 lie on the Periplasmic side of the membrane; it reads VIVGLDELP. Residues 125–150 form a helical membrane-spanning segment; that stretch reads KAILFYRQFLQWFGGMGIIVLAVAIL. The Cytoplasmic portion of the chain corresponds to 151-177; it reads PVLGIGGMQLYRAEIPGPVKDTKMTPR. A helical membrane pass occupies residues 178–202; the sequence is IAETAKALWYIYLSLTIACAVAFWL. Residues 203–205 are Periplasmic-facing; sequence AGM. An intramembrane region is located at residue Thr206. The segment at residues 207–218 is an intramembrane region (helical; Pore-forming); that stretch reads PFDAISHSFSTI. The stretch at 219–224 is an intramembrane region; that stretch reads AIGGFS. The selectivity filter part 2 stretch occupies residues 219–224; that stretch reads AIGGFS. Ile220 and Gly221 together coordinate K(+). The Periplasmic segment spans residues 225-234; sequence THDASMGYFD. An intramembrane region (helical) is located at residues 235–250; that stretch reads SYAINLITVVFLLISA. The chain crosses the membrane as a helical span at residues 276 to 296; the sequence is FRAFIFIQVLLFLVCFLLLLK. The segment at residues 303–318 is an intramembrane region (helical; Pore-forming); it reads PYDAFDQALFQTVSIS. Residues 319-324 lie within the membrane without spanning it; the sequence is TTAGFT. Positions 319 to 324 are selectivity filter part 3; sequence TTAGFT. Positions 320 and 321 each coordinate K(+). The Periplasmic portion of the chain corresponds to 325–332; the sequence is TTGFADWP. Residues 333–344 constitute an intramembrane region (helical); the sequence is LFLPVLLLFSSF. The segment at residues 345–357 is an intramembrane region (note=Loop between two helices); that stretch reads IGGCAGSTGGGMK. The helical transmembrane segment at 392–419 threads the bilayer; that stretch reads PQRVVDAVWGFFSAYALVFVVCMLGLIA. Topologically, residues 420–421 are periplasmic; that stretch reads TG. Residues 422-423 lie within the membrane without spanning it; the sequence is MD. Positions 424–434 form an intramembrane region, helical; Pore-forming; it reads ELSAFSAVAAT. An intramembrane segment occupies 435-441; that stretch reads LNNLGPG. The interval 436-441 is selectivity filter part 4; sequence NNLGPG. K(+) is bound by residues Asn437 and Leu438. The Periplasmic segment spans residues 442 to 453; sequence LGEVALHFGDVN. Positions 454-465 form an intramembrane region, helical; it reads DKAKWVLIVSML.

Belongs to the TrkH potassium transport family. As to quaternary structure, homodimer.

Its subcellular location is the cell inner membrane. Low-affinity potassium transport system. Interacts with trk system potassium uptake protein TrkA and requires TrkE for transport activity. Selective for permeation of potassium ion and rubidium ion over smaller ions such as natrium or litium. The polypeptide is Trk system potassium uptake protein TrkH (Vibrio parahaemolyticus serotype O3:K6 (strain RIMD 2210633)).